The sequence spans 567 residues: Diphtheria toxin (567 aa).

A signal peptide spans 1 to 32 (MLVRGYVVSRKLFASILIGALLGIGAPPSAHA). NAD(+) is bound by residues histidine 53 and tyrosine 97. Glutamate 180 is a catalytic residue. 2 cysteine pairs are disulfide-bonded: cysteine 218–cysteine 233 and cysteine 493–cysteine 503.

Homodimer. In terms of processing, proteolytic activation by host furin cleaves the protein in two parts, Diphtheria toxin fragment A and Diphtheria toxin fragment B; which remain associated via a disulfide bond.

It carries out the reaction diphthamide-[translation elongation factor 2] + NAD(+) = N-(ADP-D-ribosyl)diphthamide-[translation elongation factor 2] + nicotinamide + H(+). Its activity is regulated as follows. Partially inhibited by 1,8-naphthalimide (NAP). Its function is as follows. Diphtheria toxin, produced by a phage infecting Corynebacterium diphtheriae, is a proenzyme that, after activation, catalyzes the covalent attachment of the ADP ribose moiety of NAD to eukaryotic elongation factor 2 (eEF-2). Fragment A is the catalytic portion responsible for enzymatic ADP-ribosylation of elongation factor 2, while fragment B is responsible for binding of toxin to cell receptors and entry of fragment A. The polypeptide is Diphtheria toxin (Corynebacterium diphtheriae).